The sequence spans 36 residues: Conotoxin Bu21 (36 aa).

A propeptide spanning residues aspartate 1–lysine 21 is cleaved from the precursor. 2 cysteine pairs are disulfide-bonded: cysteine 22–cysteine 28 and cysteine 23–cysteine 34.

The protein belongs to the conotoxin A superfamily. Expressed by the venom duct.

The protein resides in the secreted. This is Conotoxin Bu21 from Conus bullatus (Bubble cone).